Reading from the N-terminus, the 157-residue chain is Thiocyanate hydrolase subunit beta (157 aa).

In terms of assembly, heterododecamer consisting of 4 alpha, 4 beta, and 4 gamma subunits.

It catalyses the reaction thiocyanate + H2O + 2 H(+) = carbonyl sulfide + NH4(+). The protein operates within organosulfur degradation; thiocyanate degradation. In terms of biological role, involved in the degradation of thiocyanate. This is Thiocyanate hydrolase subunit beta (scnB) from Thiobacillus thioparus.